Consider the following 413-residue polypeptide: MGQQGQSGTSAGNPDSLKQDKISKSGDSLTTQDGNATGQQEATNYTNLPPNLTPTADWPNALSFTNKNNAHRAQLFLRGLLGSIPVLVNRSGSDSNKFQATDQKWSYTDLQSDQTKLNLPAYGEVNGLLNPALVETYFGNTRAGGSGSNTTSSPGIGFKIPEQNNDSKATLITPGLAWTPQDVGNLVVSGTSLSFQLGGWLVSFTDFIKPRAGYLGLQLSGLDASDSDQRELIWAKRPWAAFRGSWVNRLGRVESVWDLKGVWADQAQLAAQAATSEASGSALAPHPNALAFQVSVVEASAYSSSTSSSGSGSSSNTSPYLHLIKPKKVESTTQLDQGLKNLLDPNQVRTKLRQSFGTDHSTQPQSLKTTTPVFGTSSGNIGSVLSGGGAGGGSSGSGQSGVDLSPVERVSGH.

3 stretches are compositionally biased toward polar residues: residues 1–13 (MGQQGQSGTSAGN), 25–54 (SGDSLTTQDGNATGQQEATNYTNLPPNLTP), and 355–376 (SFGTDHSTQPQSLKTTTPVFGT). 2 disordered regions span residues 1–60 (MGQQ…DWPN) and 355–413 (SFGT…VSGH). The span at 385 to 399 (LSGGGAGGGSSGSGQ) shows a compositional bias: gly residues.

Belongs to the adhesin P1 family.

The protein is Putative adhesin P1-like protein MPN_144 of Mycoplasma pneumoniae (strain ATCC 29342 / M129 / Subtype 1) (Mycoplasmoides pneumoniae).